A 157-amino-acid chain; its full sequence is SsrA-binding protein (157 aa).

Belongs to the SmpB family.

It localises to the cytoplasm. Functionally, required for rescue of stalled ribosomes mediated by trans-translation. Binds to transfer-messenger RNA (tmRNA), required for stable association of tmRNA with ribosomes. tmRNA and SmpB together mimic tRNA shape, replacing the anticodon stem-loop with SmpB. tmRNA is encoded by the ssrA gene; the 2 termini fold to resemble tRNA(Ala) and it encodes a 'tag peptide', a short internal open reading frame. During trans-translation Ala-aminoacylated tmRNA acts like a tRNA, entering the A-site of stalled ribosomes, displacing the stalled mRNA. The ribosome then switches to translate the ORF on the tmRNA; the nascent peptide is terminated with the 'tag peptide' encoded by the tmRNA and targeted for degradation. The ribosome is freed to recommence translation, which seems to be the essential function of trans-translation. This chain is SsrA-binding protein, found in Limosilactobacillus reuteri (strain DSM 20016) (Lactobacillus reuteri).